A 292-amino-acid polypeptide reads, in one-letter code: 5,10-methylenetetrahydrofolate reductase (292 aa).

Residue glutamate 28 is the Proton donor/acceptor of the active site. Threonine 59 is a binding site for NADH. The FAD site is built by tyrosine 60, alanine 62, histidine 88, arginine 118, glycine 119, aspartate 120, alanine 132, tyrosine 152, histidine 156, aspartate 165, asparagine 168, lysine 171, and lysine 172. Aspartate 120 serves as a coordination point for (6S)-5-methyl-5,6,7,8-tetrahydrofolate. Glutamine 183 lines the NADH pocket. Glutamine 183, glutamine 219, and lysine 279 together coordinate (6S)-5-methyl-5,6,7,8-tetrahydrofolate.

The protein belongs to the methylenetetrahydrofolate reductase family. FAD is required as a cofactor.

The enzyme catalyses (6S)-5-methyl-5,6,7,8-tetrahydrofolate + NAD(+) = (6R)-5,10-methylene-5,6,7,8-tetrahydrofolate + NADH + H(+). It functions in the pathway one-carbon metabolism; tetrahydrofolate interconversion. The protein operates within amino-acid biosynthesis; L-methionine biosynthesis via de novo pathway. In terms of biological role, catalyzes the NADH-dependent reduction of 5,10-methylenetetrahydrofolate to 5-methyltetrahydrofolate. Is required to provide the methyl group necessary for methionine synthetase to convert homocysteine to methionine; the methyl group is given by 5-methyltetrahydrofolate. In Buchnera aphidicola subsp. Schizaphis graminum (strain Sg), this protein is 5,10-methylenetetrahydrofolate reductase (metF).